We begin with the raw amino-acid sequence, 147 residues long: TRAP-T-associated universal stress protein TeaD (147 aa).

Residues 8–10 (PVD), valine 38, 117–122 (GAQGTN), and 131–133 (SVA) each bind ATP.

The protein belongs to the universal stress protein A family. As to quaternary structure, homodimer or homotetramer; in equilibrium. The dimer/tetramer ratio is ATP-dependent. ATP stabilizes dimer-dimer complexes, with one ATP molecule bound to each monomer.

It localises to the cytoplasm. Functionally, ATP-binding protein that negatively regulates activity of the tripartite ATP-independent periplasmic (TRAP) ectoine transport system TeaABC. May regulate uptake according to the ATP status of the cell. This chain is TRAP-T-associated universal stress protein TeaD (teaD), found in Halomonas elongata (strain ATCC 33173 / DSM 2581 / NBRC 15536 / NCIMB 2198 / 1H9).